Here is a 400-residue protein sequence, read N- to C-terminus: Endoglucanase 5A (400 aa).

An N-terminal signal peptide occupies residues 1–26 (MKKITTIFVVLLMTVALFSIGNTTAA). Residues His-61, 65-66 (WY), Tyr-92, and His-127 contribute to the substrate site. Glu-165 functions as the Proton donor in the catalytic mechanism. Tyr-228 contacts substrate. Glu-254 acts as the Nucleophile in catalysis. Residues 260–261 (AT), Trp-288, and 293–295 (KDE) contribute to the substrate site. The interval 328–363 (ESASIPPSDPTPPSDPGEPDPTPPSDPGEYPAWDPN) is disordered. A compositionally biased stretch (pro residues) spans 334–353 (PSDPTPPSDPGEPDPTPPSD). Positions 357 to 396 (YPAWDPNQIYTNEIVYHNGQLWQAKWWTQNQEPGDPYGPW) constitute a Chitin-binding type-3 domain.

The protein belongs to the glycosyl hydrolase 5 (cellulase A) family. As to quaternary structure, monomer.

The protein localises to the secreted. The enzyme catalyses Endohydrolysis of (1-&gt;4)-beta-D-glucosidic linkages in cellulose, lichenin and cereal beta-D-glucans.. The polypeptide is Endoglucanase 5A (cel5A) (Salipaludibacillus agaradhaerens (Bacillus agaradhaerens)).